A 509-amino-acid chain; its full sequence is Putative ATP-dependent RNA helicase QP509L (509 aa).

The region spanning 110 to 262 (KKLLSPYGRF…KIILHHLGQP (153 aa)) is the Helicase ATP-binding domain. Position 123–130 (123–130 (LNTGLGKT)) interacts with ATP. The short motif at 215 to 218 (DEAH) is the DEAH box element.

It belongs to the DEAD box helicase family. DEAH subfamily.

It carries out the reaction ATP + H2O = ADP + phosphate + H(+). This is Putative ATP-dependent RNA helicase QP509L from Ornithodoros (relapsing fever ticks).